The following is a 206-amino-acid chain: Ras-related protein Ral-B (206 aa).

Residue 21–29 (GSGGVGKSA) participates in GTP binding. Residues 43-51 (YEPTKADSY) carry the Effector region motif. Residues 68 to 72 (DTAGQ), 128 to 131 (NKSD), and 158 to 160 (SAK) each bind GTP. Residues 181–206 (MSENKDKNGRKSGKSKKSFKERCCLL) form a disordered region. Cys203 is subject to Cysteine methyl ester. The S-geranylgeranyl cysteine moiety is linked to residue Cys203. A propeptide spans 204–206 (CLL) (removed in mature form).

It belongs to the small GTPase superfamily. Ras family. Interacts with EXOC2/Sec5 and EXOC8/Exo84. Interacts (via effector domain) with RALBP1. Post-translationally, prenylation is essential for membrane localization. In terms of processing, the farnesylated form confers resistance to the proapoptotic and anti-anchorage-dependent growth effects of some geranylgeranyltransferase I inhibitors.

Its subcellular location is the cell membrane. The protein localises to the midbody. It carries out the reaction GTP + H2O = GDP + phosphate + H(+). Its activity is regulated as follows. Alternates between an inactive form bound to GDP and an active form bound to GTP. Activated by a guanine nucleotide-exchange factor (GEF) and inactivated by a GTPase-activating protein (GAP). In terms of biological role, multifunctional GTPase involved in a variety of cellular processes including gene expression, cell migration, cell proliferation, oncogenic transformation and membrane trafficking. Accomplishes its multiple functions by interacting with distinct downstream effectors. Acts as a GTP sensor for GTP-dependent exocytosis of dense core vesicles. Required both to stabilize the assembly of the exocyst complex and to localize functional exocyst complexes to the leading edge of migrating cells. Required for suppression of apoptosis. In late stages of cytokinesis, upon completion of the bridge formation between dividing cells, mediates exocyst recruitment to the midbody to drive abscission. Involved in ligand-dependent receptor mediated endocytosis of the EGF and insulin receptors. This chain is Ras-related protein Ral-B (Ralb), found in Rattus norvegicus (Rat).